A 305-amino-acid polypeptide reads, in one-letter code: Probable 2-methylisocitrate lyase 1 (305 aa).

Residue 52–54 (SGA) participates in substrate binding. Positions 91 and 93 each coordinate Mg(2+). Residues 128–129 (CG), R163, E193, 216–218 (NMT), R247, and R276 each bind substrate.

It belongs to the isocitrate lyase/PEP mutase superfamily. Methylisocitrate lyase family. In terms of assembly, homotetramer; dimer of dimers. Mg(2+) serves as cofactor.

The catalysed reaction is (2S,3R)-3-hydroxybutane-1,2,3-tricarboxylate = pyruvate + succinate. Catalyzes the thermodynamically favored C-C bond cleavage of (2R,3S)-2-methylisocitrate to yield pyruvate and succinate via an alpha-carboxy-carbanion intermediate. In Corynebacterium glutamicum (strain ATCC 13032 / DSM 20300 / JCM 1318 / BCRC 11384 / CCUG 27702 / LMG 3730 / NBRC 12168 / NCIMB 10025 / NRRL B-2784 / 534), this protein is Probable 2-methylisocitrate lyase 1.